The primary structure comprises 254 residues: Phosphate import ATP-binding protein PstB (254 aa).

The ABC transporter domain maps to 9–249 (MSVKDLDLFY…PVDKRTEDYI (241 aa)). An ATP-binding site is contributed by 41–48 (GPSGCGKS).

The protein belongs to the ABC transporter superfamily. Phosphate importer (TC 3.A.1.7) family. As to quaternary structure, the complex is composed of two ATP-binding proteins (PstB), two transmembrane proteins (PstC and PstA) and a solute-binding protein (PstS).

It localises to the cell membrane. It carries out the reaction phosphate(out) + ATP + H2O = ADP + 2 phosphate(in) + H(+). Its function is as follows. Part of the ABC transporter complex PstSACB involved in phosphate import. Responsible for energy coupling to the transport system. This chain is Phosphate import ATP-binding protein PstB, found in Clostridioides difficile (strain 630) (Peptoclostridium difficile).